The primary structure comprises 134 residues: Small ribosomal subunit protein uS11 (134 aa).

This sequence belongs to the universal ribosomal protein uS11 family. Part of the 30S ribosomal subunit. Interacts with proteins S7 and S18. Binds to IF-3.

In terms of biological role, located on the platform of the 30S subunit, it bridges several disparate RNA helices of the 16S rRNA. Forms part of the Shine-Dalgarno cleft in the 70S ribosome. This is Small ribosomal subunit protein uS11 from Paraburkholderia xenovorans (strain LB400).